A 319-amino-acid polypeptide reads, in one-letter code: Porphobilinogen deaminase 1 (319 aa).

Cysteine 244 is subject to S-(dipyrrolylmethanemethyl)cysteine.

Belongs to the HMBS family. As to quaternary structure, monomer. It depends on dipyrromethane as a cofactor.

It catalyses the reaction 4 porphobilinogen + H2O = hydroxymethylbilane + 4 NH4(+). The protein operates within porphyrin-containing compound metabolism; protoporphyrin-IX biosynthesis; coproporphyrinogen-III from 5-aminolevulinate: step 2/4. Its function is as follows. Tetrapolymerization of the monopyrrole PBG into the hydroxymethylbilane pre-uroporphyrinogen in several discrete steps. The chain is Porphobilinogen deaminase 1 (hemC1) from Streptomyces coelicolor (strain ATCC BAA-471 / A3(2) / M145).